The following is a 357-amino-acid chain: Phospho-N-acetylmuramoyl-pentapeptide-transferase (357 aa).

Helical transmembrane passes span 4–24 (QILF…PLLI), 52–72 (TMGG…SKVI), 77–97 (PTFS…VGFL), 115–135 (AKMA…LQFA), 153–173 (FGWT…ILAM), 186–206 (LATG…VWQF), 228–248 (PLDL…FLWW), 255–275 (IFMG…LAIC), 280–300 (LLVA…VIQV), and 334–354 (FWII…AGWA).

The protein belongs to the glycosyltransferase 4 family. MraY subfamily. The cofactor is Mg(2+).

It is found in the cell membrane. The catalysed reaction is UDP-N-acetyl-alpha-D-muramoyl-L-alanyl-gamma-D-glutamyl-meso-2,6-diaminopimeloyl-D-alanyl-D-alanine + di-trans,octa-cis-undecaprenyl phosphate = di-trans,octa-cis-undecaprenyl diphospho-N-acetyl-alpha-D-muramoyl-L-alanyl-D-glutamyl-meso-2,6-diaminopimeloyl-D-alanyl-D-alanine + UMP. It participates in cell wall biogenesis; peptidoglycan biosynthesis. Its function is as follows. Catalyzes the initial step of the lipid cycle reactions in the biosynthesis of the cell wall peptidoglycan: transfers peptidoglycan precursor phospho-MurNAc-pentapeptide from UDP-MurNAc-pentapeptide onto the lipid carrier undecaprenyl phosphate, yielding undecaprenyl-pyrophosphoryl-MurNAc-pentapeptide, known as lipid I. This chain is Phospho-N-acetylmuramoyl-pentapeptide-transferase, found in Streptomyces avermitilis (strain ATCC 31267 / DSM 46492 / JCM 5070 / NBRC 14893 / NCIMB 12804 / NRRL 8165 / MA-4680).